A 295-amino-acid polypeptide reads, in one-letter code: Aspartate carbamoyltransferase catalytic subunit (295 aa).

Carbamoyl phosphate is bound by residues arginine 49 and threonine 50. Lysine 77 is a binding site for L-aspartate. Arginine 99, histidine 127, and glutamine 130 together coordinate carbamoyl phosphate. L-aspartate contacts are provided by arginine 161 and arginine 212. Carbamoyl phosphate-binding residues include glycine 251 and proline 252.

This sequence belongs to the aspartate/ornithine carbamoyltransferase superfamily. ATCase family. In terms of assembly, heterododecamer (2C3:3R2) of six catalytic PyrB chains organized as two trimers (C3), and six regulatory PyrI chains organized as three dimers (R2).

The catalysed reaction is carbamoyl phosphate + L-aspartate = N-carbamoyl-L-aspartate + phosphate + H(+). It functions in the pathway pyrimidine metabolism; UMP biosynthesis via de novo pathway; (S)-dihydroorotate from bicarbonate: step 2/3. Catalyzes the condensation of carbamoyl phosphate and aspartate to form carbamoyl aspartate and inorganic phosphate, the committed step in the de novo pyrimidine nucleotide biosynthesis pathway. This is Aspartate carbamoyltransferase catalytic subunit from Campylobacter jejuni (strain RM1221).